The primary structure comprises 104 residues: ATP synthase subunit c (104 aa).

The next 2 membrane-spanning stretches (helical) occupy residues 31-51 (SVVAAGIGLGLAALGGAIGMG) and 75-95 (MFIALAMIEAQVIYALVVAMI).

This sequence belongs to the ATPase C chain family. As to quaternary structure, F-type ATPases have 2 components, F(1) - the catalytic core - and F(0) - the membrane proton channel. F(1) has five subunits: alpha(3), beta(3), gamma(1), delta(1), epsilon(1). F(0) has three main subunits: a(1), b(2) and c(10-14). The alpha and beta chains form an alternating ring which encloses part of the gamma chain. F(1) is attached to F(0) by a central stalk formed by the gamma and epsilon chains, while a peripheral stalk is formed by the delta and b chains.

The protein resides in the cell inner membrane. Its function is as follows. F(1)F(0) ATP synthase produces ATP from ADP in the presence of a proton or sodium gradient. F-type ATPases consist of two structural domains, F(1) containing the extramembraneous catalytic core and F(0) containing the membrane proton channel, linked together by a central stalk and a peripheral stalk. During catalysis, ATP synthesis in the catalytic domain of F(1) is coupled via a rotary mechanism of the central stalk subunits to proton translocation. In terms of biological role, key component of the F(0) channel; it plays a direct role in translocation across the membrane. A homomeric c-ring of between 10-14 subunits forms the central stalk rotor element with the F(1) delta and epsilon subunits. This chain is ATP synthase subunit c, found in Aliarcobacter butzleri (strain RM4018) (Arcobacter butzleri).